Here is a 90-residue protein sequence, read N- to C-terminus: 10 kDa anti-sigma factor (90 aa).

As to quaternary structure, interacts with the host sigma factor RpoD, and thereby inhibits its interaction with the catalytic core of the host RNA polymerase.

In terms of biological role, transcriptional inhibitor. Inhibits sigma 70-directed transcription by weakening its interaction with the core of the host's RNA polymerase. This allows Gp55 to successfully compete for the core enzyme. Plays an important role during the prereplicative period of phage T4 development. The chain is 10 kDa anti-sigma factor (asiA) from Enterobacteria phage T4 (Bacteriophage T4).